Consider the following 434-residue polypeptide: Putative nuclease OPG089 (434 aa).

Residues D33, D74, E168, D170, D196, and D198 each contribute to the Mg(2+) site.

This sequence belongs to the XPG/RAD2 endonuclease family. FEN1 subfamily. Requires Mg(2+) as cofactor.

It is found in the virion. Putative nuclease that seems to be required for double-strand break repair, homologous recombination, and production of full-length viral genomic DNA. The sequence is that of Putative nuclease OPG089 (OPG089) from Vaccinia virus (strain Western Reserve) (VACV).